We begin with the raw amino-acid sequence, 204 residues long: Dephospho-CoA kinase (204 aa).

The region spanning 3–204 (VIGLTGGIGS…DRLDLAYRAH (202 aa)) is the DPCK domain. 11-16 (GSGKSY) lines the ATP pocket.

Belongs to the CoaE family.

It localises to the cytoplasm. The catalysed reaction is 3'-dephospho-CoA + ATP = ADP + CoA + H(+). The protein operates within cofactor biosynthesis; coenzyme A biosynthesis; CoA from (R)-pantothenate: step 5/5. Its function is as follows. Catalyzes the phosphorylation of the 3'-hydroxyl group of dephosphocoenzyme A to form coenzyme A. The chain is Dephospho-CoA kinase from Ralstonia nicotianae (strain ATCC BAA-1114 / GMI1000) (Ralstonia solanacearum).